We begin with the raw amino-acid sequence, 329 residues long: Ribosomal RNA small subunit methyltransferase H (329 aa).

S-adenosyl-L-methionine contacts are provided by residues 39–41 (GGY), Asp57, Phe84, Asp100, and Gln107. Positions 285-305 (GPDKDELAQNPRSRSALLRVG) are disordered.

Belongs to the methyltransferase superfamily. RsmH family.

Its subcellular location is the cytoplasm. It catalyses the reaction cytidine(1402) in 16S rRNA + S-adenosyl-L-methionine = N(4)-methylcytidine(1402) in 16S rRNA + S-adenosyl-L-homocysteine + H(+). Specifically methylates the N4 position of cytidine in position 1402 (C1402) of 16S rRNA. The polypeptide is Ribosomal RNA small subunit methyltransferase H (Ruegeria sp. (strain TM1040) (Silicibacter sp.)).